Consider the following 418-residue polypeptide: Histidinol dehydrogenase (418 aa).

NAD(+) is bound by residues Y119, Q180, and N203. Residues T226, Q248, and H251 each coordinate substrate. Zn(2+)-binding residues include Q248 and H251. Active-site proton acceptor residues include E316 and H317. The substrate site is built by H317, D350, E404, and H409. D350 provides a ligand contact to Zn(2+). H409 provides a ligand contact to Zn(2+).

It belongs to the histidinol dehydrogenase family. Zn(2+) serves as cofactor.

The catalysed reaction is L-histidinol + 2 NAD(+) + H2O = L-histidine + 2 NADH + 3 H(+). The protein operates within amino-acid biosynthesis; L-histidine biosynthesis; L-histidine from 5-phospho-alpha-D-ribose 1-diphosphate: step 9/9. Catalyzes the sequential NAD-dependent oxidations of L-histidinol to L-histidinaldehyde and then to L-histidine. This chain is Histidinol dehydrogenase, found in Staphylococcus aureus (strain MSSA476).